The primary structure comprises 104 residues: Large ribosomal subunit protein uL24 (104 aa).

The protein belongs to the universal ribosomal protein uL24 family. In terms of assembly, part of the 50S ribosomal subunit.

One of two assembly initiator proteins, it binds directly to the 5'-end of the 23S rRNA, where it nucleates assembly of the 50S subunit. Its function is as follows. One of the proteins that surrounds the polypeptide exit tunnel on the outside of the subunit. This is Large ribosomal subunit protein uL24 from Shewanella piezotolerans (strain WP3 / JCM 13877).